The following is a 464-amino-acid chain: Integrator complex subunit 12 (464 aa).

The disordered stretch occupies residues 42–98 (GNDSVYRPQPKEVEQPKAMLSKVKPETKASSSTPSSSILSKPLASEKVKKEAEKRTA). The segment covering 69–84 (KASSSTPSSSILSKPL) has biased composition (low complexity). Residues 85–98 (ASEKVKKEAEKRTA) are compositionally biased toward basic and acidic residues. The PHD-type zinc finger occupies 156–212 (GLACVVCRQMTVFSGNQLVECQECHNLYHQDCHRPQVTDKDVNDPRLVWYCARCTRQ). Disordered stretches follow at residues 216–252 (MAQK…LKSK) and 312–445 (TNSQ…SQLN). Residues 227-239 (PAPSAVSAVTPVA) are compositionally biased toward low complexity. The segment covering 312–329 (TNSQATSGKPPSLSSVQK) has biased composition (polar residues). Positions 339 to 371 (SKAGSVSKSGSGGSSSTIPLKPLPPLILGKTGL) are enriched in low complexity. The segment covering 372 to 382 (SRSMSSDNVSK) has biased composition (polar residues). Residues 384–421 (GLPSPNPSSSGSVSSLSSQLGSNNGSSNTAGSNVNSSN) are compositionally biased toward low complexity. Positions 428 to 445 (SMQQSGAKGPTSQESQLN) are enriched in polar residues.

The protein belongs to the Integrator subunit 12 family. Component of the Integrator complex, composed of core subunits INTS1, INTS2, INTS3, INTS4, INTS5, INTS6, INTS7, INTS8, INTS9/RC74, INTS10, INTS11/CPSF3L, INTS12, INTS13, INTS14 and INTS15. The core complex associates with protein phosphatase 2A subunits PPP2CA and PPP2R1A, to form the Integrator-PP2A (INTAC) complex.

Its subcellular location is the nucleus. Component of the integrator complex, a multiprotein complex that terminates RNA polymerase II (Pol II) transcription in the promoter-proximal region of genes. The integrator complex provides a quality checkpoint during transcription elongation by driving premature transcription termination of transcripts that are unfavorably configured for transcriptional elongation: the complex terminates transcription by (1) catalyzing dephosphorylation of the C-terminal domain (CTD) of Pol II subunit POLR2A/RPB1 and SUPT5H/SPT5, (2) degrading the exiting nascent RNA transcript via endonuclease activity and (3) promoting the release of Pol II from bound DNA. The integrator complex is also involved in terminating the synthesis of non-coding Pol II transcripts, such as enhancer RNAs (eRNAs), small nuclear RNAs (snRNAs), telomerase RNAs and long non-coding RNAs (lncRNAs). This is Integrator complex subunit 12 (ints12) from Xenopus laevis (African clawed frog).